An 83-amino-acid polypeptide reads, in one-letter code: Apolipoprotein C-I, basic form (83 aa).

An N-terminal signal peptide occupies residues Met-1–Gly-26.

The protein belongs to the apolipoprotein C1 family.

The protein resides in the secreted. In terms of biological role, inhibitor of lipoprotein binding to the low density lipoprotein (LDL) receptor, LDL receptor-related protein, and very low density lipoprotein (VLDL) receptor. Associates with high density lipoproteins (HDL) and the triacylglycerol-rich lipoproteins in the plasma and makes up about 10% of the protein of the VLDL and 2% of that of HDL. Appears to interfere directly with fatty acid uptake and is also the major plasma inhibitor of cholesteryl ester transfer protein (CETP). Binds free fatty acids and reduces their intracellular esterification. Modulates the interaction of APOE with beta-migrating VLDL and inhibits binding of beta-VLDL to the LDL receptor-related protein. The polypeptide is Apolipoprotein C-I, basic form (APOC1) (Papio anubis (Olive baboon)).